The sequence spans 465 residues: 3-isopropylmalate dehydratase large subunit (465 aa).

[4Fe-4S] cluster-binding residues include Cys347, Cys407, and Cys410.

It belongs to the aconitase/IPM isomerase family. LeuC type 1 subfamily. As to quaternary structure, heterodimer of LeuC and LeuD. Requires [4Fe-4S] cluster as cofactor.

The catalysed reaction is (2R,3S)-3-isopropylmalate = (2S)-2-isopropylmalate. It participates in amino-acid biosynthesis; L-leucine biosynthesis; L-leucine from 3-methyl-2-oxobutanoate: step 2/4. In terms of biological role, catalyzes the isomerization between 2-isopropylmalate and 3-isopropylmalate, via the formation of 2-isopropylmaleate. This is 3-isopropylmalate dehydratase large subunit from Aeromonas hydrophila subsp. hydrophila (strain ATCC 7966 / DSM 30187 / BCRC 13018 / CCUG 14551 / JCM 1027 / KCTC 2358 / NCIMB 9240 / NCTC 8049).